The chain runs to 143 residues: Large ribosomal subunit protein uL13 (143 aa).

This sequence belongs to the universal ribosomal protein uL13 family. In terms of assembly, part of the 50S ribosomal subunit.

Its function is as follows. This protein is one of the early assembly proteins of the 50S ribosomal subunit, although it is not seen to bind rRNA by itself. It is important during the early stages of 50S assembly. The protein is Large ribosomal subunit protein uL13 of Geobacter sulfurreducens (strain ATCC 51573 / DSM 12127 / PCA).